Consider the following 62-residue polypeptide: Large ribosomal subunit protein bL32 (62 aa).

A disordered region spans residues 1 to 20 (MAVPARHTSKQKKRSRRGHI). Basic residues predominate over residues 7-20 (HTSKQKKRSRRGHI).

The protein belongs to the bacterial ribosomal protein bL32 family.

The polypeptide is Large ribosomal subunit protein bL32 (Lactobacillus acidophilus (strain ATCC 700396 / NCK56 / N2 / NCFM)).